Reading from the N-terminus, the 920-residue chain is DNA ligase (920 aa).

NAD(+)-binding positions include 90–94 (DAAYD), 139–140 (SL), and E173. Residue K175 is the N6-AMP-lysine intermediate of the active site. The NAD(+) site is built by R196, E235, K360, and K384. Residues C481, C484, C500, and C506 each contribute to the Zn(2+) site. The interval 662 to 691 (GEAAIESAETQGDTASETTGAPTGAEAPLG) is disordered. Over residues 669 to 682 (AETQGDTASETTGA) the composition is skewed to polar residues. Positions 839–920 (SLPQTLAGKT…FAQLLATGTI (82 aa)) constitute a BRCT domain.

It belongs to the NAD-dependent DNA ligase family. LigA subfamily. The cofactor is Mg(2+). Mn(2+) is required as a cofactor.

It catalyses the reaction NAD(+) + (deoxyribonucleotide)n-3'-hydroxyl + 5'-phospho-(deoxyribonucleotide)m = (deoxyribonucleotide)n+m + AMP + beta-nicotinamide D-nucleotide.. DNA ligase that catalyzes the formation of phosphodiester linkages between 5'-phosphoryl and 3'-hydroxyl groups in double-stranded DNA using NAD as a coenzyme and as the energy source for the reaction. It is essential for DNA replication and repair of damaged DNA. This Bifidobacterium longum (strain DJO10A) protein is DNA ligase.